A 282-amino-acid chain; its full sequence is Biotin synthase (282 aa).

In terms of domain architecture, Radical SAM core spans 1–228; it reads MQEIFLCSIS…NARLMVAGGR (228 aa). Cysteine 17, cysteine 21, and cysteine 24 together coordinate [4Fe-4S] cluster. Residues cysteine 61, cysteine 96, cysteine 154, and arginine 221 each contribute to the [2Fe-2S] cluster site.

Belongs to the radical SAM superfamily. Biotin synthase family. Homodimer. Requires [4Fe-4S] cluster as cofactor. [2Fe-2S] cluster serves as cofactor.

It catalyses the reaction (4R,5S)-dethiobiotin + (sulfur carrier)-SH + 2 reduced [2Fe-2S]-[ferredoxin] + 2 S-adenosyl-L-methionine = (sulfur carrier)-H + biotin + 2 5'-deoxyadenosine + 2 L-methionine + 2 oxidized [2Fe-2S]-[ferredoxin]. It participates in cofactor biosynthesis; biotin biosynthesis; biotin from 7,8-diaminononanoate: step 2/2. Its function is as follows. Catalyzes the conversion of dethiobiotin (DTB) to biotin by the insertion of a sulfur atom into dethiobiotin via a radical-based mechanism. This is Biotin synthase from Helicobacter pylori (strain P12).